We begin with the raw amino-acid sequence, 270 residues long: Checkpoint signal transducer rad24 (270 aa).

A phosphoserine mark is found at S34 and S66. Residues 242 to 270 (AAAGGNTEGAQENAPSNAPEGEAEPKADA) form a disordered region.

It belongs to the 14-3-3 family. In terms of assembly, homodimer. Binds preferentially to mei2 phosphorylated by ran1/pat1. Binds preferentially to cdc25 phosphorylated by srk1 during G2; the interaction is increased during osmotic stress. Interacts with byr2. Interacts with rad25.

The protein localises to the cytoplasm. Its function is as follows. Acts in cell cycle and stress checkpoint signaling by sequestering signal transducers regulated by the checkpoints. Required for the DNA damage checkpoint that ensures that DNA damage is repaired before mitosis is attempted. During environmental stress, sequesters srk1-phosphorylated cdc25 in the cytoplasm to delay the G2/M transition. Sequesters byr2 in the cytoplasm to prevent its translocation to the plasma membrane. Sequesters ran1/pat1-phosphorylated mei2 from its non-coding RNA activators (including meiRNA), to prevent meiotic induction in vegetative cells and to regulate meiosis I. In Schizosaccharomyces pombe (strain 972 / ATCC 24843) (Fission yeast), this protein is Checkpoint signal transducer rad24.